Consider the following 400-residue polypeptide: Enoyl-[acyl-carrier-protein] reductase [NADH] (400 aa).

NAD(+) contacts are provided by residues 48 to 53 (GASSGY), 74 to 75 (FE), 111 to 112 (DA), and 139 to 140 (LA). Residue Y225 coordinates substrate. The active-site Proton donor is Y235. Residues K244 and 273–275 (VVT) each bind NAD(+).

It belongs to the TER reductase family. Monomer.

The enzyme catalyses a 2,3-saturated acyl-[ACP] + NAD(+) = a (2E)-enoyl-[ACP] + NADH + H(+). It participates in lipid metabolism; fatty acid biosynthesis. Its function is as follows. Involved in the final reduction of the elongation cycle of fatty acid synthesis (FAS II). Catalyzes the reduction of a carbon-carbon double bond in an enoyl moiety that is covalently linked to an acyl carrier protein (ACP). This chain is Enoyl-[acyl-carrier-protein] reductase [NADH], found in Marinomonas sp. (strain MWYL1).